The sequence spans 336 residues: Holliday junction branch migration complex subunit RuvB (336 aa).

The large ATPase domain (RuvB-L) stretch occupies residues 1–184 (MYDEERIVSG…FGIVGHMEYY (184 aa)). Residues leucine 23, arginine 24, glycine 65, lysine 68, threonine 69, threonine 70, 131 to 133 (EDY), arginine 174, tyrosine 184, and arginine 221 contribute to the ATP site. Threonine 69 is a binding site for Mg(2+). A small ATPAse domain (RuvB-S) region spans residues 185–255 (NEVDLSQIIK…IVQFALDLLR (71 aa)). A head domain (RuvB-H) region spans residues 258 to 336 (KVGLDRTDRK…HLGIKYNKEG (79 aa)). Positions 313 and 318 each coordinate DNA.

It belongs to the RuvB family. Homohexamer. Forms an RuvA(8)-RuvB(12)-Holliday junction (HJ) complex. HJ DNA is sandwiched between 2 RuvA tetramers; dsDNA enters through RuvA and exits via RuvB. An RuvB hexamer assembles on each DNA strand where it exits the tetramer. Each RuvB hexamer is contacted by two RuvA subunits (via domain III) on 2 adjacent RuvB subunits; this complex drives branch migration. In the full resolvosome a probable DNA-RuvA(4)-RuvB(12)-RuvC(2) complex forms which resolves the HJ.

Its subcellular location is the cytoplasm. It carries out the reaction ATP + H2O = ADP + phosphate + H(+). In terms of biological role, the RuvA-RuvB-RuvC complex processes Holliday junction (HJ) DNA during genetic recombination and DNA repair, while the RuvA-RuvB complex plays an important role in the rescue of blocked DNA replication forks via replication fork reversal (RFR). RuvA specifically binds to HJ cruciform DNA, conferring on it an open structure. The RuvB hexamer acts as an ATP-dependent pump, pulling dsDNA into and through the RuvAB complex. RuvB forms 2 homohexamers on either side of HJ DNA bound by 1 or 2 RuvA tetramers; 4 subunits per hexamer contact DNA at a time. Coordinated motions by a converter formed by DNA-disengaged RuvB subunits stimulates ATP hydrolysis and nucleotide exchange. Immobilization of the converter enables RuvB to convert the ATP-contained energy into a lever motion, pulling 2 nucleotides of DNA out of the RuvA tetramer per ATP hydrolyzed, thus driving DNA branch migration. The RuvB motors rotate together with the DNA substrate, which together with the progressing nucleotide cycle form the mechanistic basis for DNA recombination by continuous HJ branch migration. Branch migration allows RuvC to scan DNA until it finds its consensus sequence, where it cleaves and resolves cruciform DNA. The polypeptide is Holliday junction branch migration complex subunit RuvB (Ligilactobacillus salivarius (strain UCC118) (Lactobacillus salivarius)).